We begin with the raw amino-acid sequence, 158 residues long: 2-C-methyl-D-erythritol 2,4-cyclodiphosphate synthase (158 aa).

A divalent metal cation-binding residues include aspartate 9 and histidine 11. Residues 9–11 (DVH) and 35–36 (HS) each bind 4-CDP-2-C-methyl-D-erythritol 2-phosphate. Histidine 43 is an a divalent metal cation binding site. 4-CDP-2-C-methyl-D-erythritol 2-phosphate is bound by residues 57–59 (DIG), 62–66 (FPDTD), 101–107 (AQKPKMA), 133–136 (TTTE), phenylalanine 140, and arginine 143.

Belongs to the IspF family. As to quaternary structure, homotrimer. Requires a divalent metal cation as cofactor.

It carries out the reaction 4-CDP-2-C-methyl-D-erythritol 2-phosphate = 2-C-methyl-D-erythritol 2,4-cyclic diphosphate + CMP. It participates in isoprenoid biosynthesis; isopentenyl diphosphate biosynthesis via DXP pathway; isopentenyl diphosphate from 1-deoxy-D-xylulose 5-phosphate: step 4/6. Involved in the biosynthesis of isopentenyl diphosphate (IPP) and dimethylallyl diphosphate (DMAPP), two major building blocks of isoprenoid compounds. Catalyzes the conversion of 4-diphosphocytidyl-2-C-methyl-D-erythritol 2-phosphate (CDP-ME2P) to 2-C-methyl-D-erythritol 2,4-cyclodiphosphate (ME-CPP) with a corresponding release of cytidine 5-monophosphate (CMP). The chain is 2-C-methyl-D-erythritol 2,4-cyclodiphosphate synthase from Bacillus thuringiensis subsp. konkukian (strain 97-27).